The primary structure comprises 119 residues: Large ribosomal subunit protein uL22c (119 aa).

The protein belongs to the universal ribosomal protein uL22 family. As to quaternary structure, part of the 50S ribosomal subunit.

It is found in the plastid. The protein localises to the chloroplast. This protein binds specifically to 23S rRNA. Functionally, the globular domain of the protein is located near the polypeptide exit tunnel on the outside of the subunit, while an extended beta-hairpin is found that lines the wall of the exit tunnel in the center of the 70S ribosome. The polypeptide is Large ribosomal subunit protein uL22c (rpl22) (Mesostigma viride (Green alga)).